The primary structure comprises 123 residues: Large ribosomal subunit protein eL8 (123 aa).

This sequence belongs to the eukaryotic ribosomal protein eL8 family. In terms of assembly, part of the 50S ribosomal subunit. Probably part of the RNase P complex.

The protein resides in the cytoplasm. Multifunctional RNA-binding protein that recognizes the K-turn motif in ribosomal RNA, the RNA component of RNase P, box H/ACA, box C/D and box C'/D' sRNAs. In Methanosphaera stadtmanae (strain ATCC 43021 / DSM 3091 / JCM 11832 / MCB-3), this protein is Large ribosomal subunit protein eL8.